Here is a 143-residue protein sequence, read N- to C-terminus: Small ribosomal subunit protein bS6 (143 aa).

A disordered region spans residues 98-143 (TEQSLIMKSKDEKGDKPERSERRRRDDEEGEAPAANDNDGDNAEAA). Residues 105 to 124 (KSKDEKGDKPERSERRRRDD) show a composition bias toward basic and acidic residues.

Belongs to the bacterial ribosomal protein bS6 family.

Its function is as follows. Binds together with bS18 to 16S ribosomal RNA. This chain is Small ribosomal subunit protein bS6, found in Xanthomonas euvesicatoria pv. vesicatoria (strain 85-10) (Xanthomonas campestris pv. vesicatoria).